The primary structure comprises 119 residues: Inner membrane protein YijD (119 aa).

Residues 1 to 8 (MKQANQDR) lie on the Cytoplasmic side of the membrane. Residues 9-28 (GTLLLALVAGLSINGTFAAL) form a helical membrane-spanning segment. Topologically, residues 29–31 (FSS) are periplasmic. The helical transmembrane segment at 32–50 (IVPFSVFPIISLVLTVYCL) threads the bilayer. Over 51–61 (HQRYLNRTMPV) the chain is Cytoplasmic. The chain crosses the membrane as a helical span at residues 62-84 (GLPGLAAACFILGVLLYSTVVRA). Topologically, residues 85 to 88 (EYPD) are periplasmic. Residues 89 to 108 (IGSNFFPAVLSVIMVFWIGA) traverse the membrane as a helical segment. Residues 109-119 (KMRNRKQEVAE) lie on the Cytoplasmic side of the membrane.

It localises to the cell inner membrane. The protein is Inner membrane protein YijD (yijD) of Escherichia coli O6:H1 (strain CFT073 / ATCC 700928 / UPEC).